Here is a 160-residue protein sequence, read N- to C-terminus: Invasion protein IagB (160 aa).

The first 19 residues, 1–19, serve as a signal peptide directing secretion; that stretch reads MHYFFIIVIWLLSINTAWA.

Belongs to the IagB/IpgF/P19 family.

This chain is Invasion protein IagB (iagB), found in Salmonella typhi.